A 604-amino-acid polypeptide reads, in one-letter code: Elongation factor 4 (604 aa).

A tr-type G domain is found at 2–184; sequence DHIRNFSIIA…AVITRMPAPR (183 aa). GTP contacts are provided by residues 14 to 19 and 131 to 134; these read DHGKST and NKMD.

It belongs to the TRAFAC class translation factor GTPase superfamily. Classic translation factor GTPase family. LepA subfamily.

It localises to the cell inner membrane. The catalysed reaction is GTP + H2O = GDP + phosphate + H(+). Required for accurate and efficient protein synthesis under certain stress conditions. May act as a fidelity factor of the translation reaction, by catalyzing a one-codon backward translocation of tRNAs on improperly translocated ribosomes. Back-translocation proceeds from a post-translocation (POST) complex to a pre-translocation (PRE) complex, thus giving elongation factor G a second chance to translocate the tRNAs correctly. Binds to ribosomes in a GTP-dependent manner. This chain is Elongation factor 4, found in Methylibium petroleiphilum (strain ATCC BAA-1232 / LMG 22953 / PM1).